The chain runs to 108 residues: Large ribosomal subunit protein uL24 (108 aa).

This sequence belongs to the universal ribosomal protein uL24 family. As to quaternary structure, part of the 50S ribosomal subunit.

One of two assembly initiator proteins, it binds directly to the 5'-end of the 23S rRNA, where it nucleates assembly of the 50S subunit. Functionally, one of the proteins that surrounds the polypeptide exit tunnel on the outside of the subunit. The polypeptide is Large ribosomal subunit protein uL24 (Mycoplasmopsis pulmonis (strain UAB CTIP) (Mycoplasma pulmonis)).